Reading from the N-terminus, the 518-residue chain is MVFPVEAIVGLVTFTFLFYFLWTKKSQKPSKPLPPKIPGGWPVIGHLFYFDDDGDDRPLARKLGDLADKYGPVFTFRLGLPLVLVVSSYEAIKDCFSTNDAIFSNRPAFLYGEYLGYKNAMLFLANYGSYWRKNRKLIIQEVLSASRLEKFKHVRFARIQTSIKNLYTRIDGNSSTINLTDWLEELNFGLIVKMIAGKNYESGKGDEQVERFKKAFKDFMILSMEFVLWDAFPIPLFKWVDFQGHVKAMKRTFKDIDSVFQNWLEEHIKKREKIMEVGTEGNEQDFIDVVLSKMSNEYLGEGYSRDTVIKATVFSLVLDAADTVALHINCGMALLINNQNALKKAQEEIDTKVGKDRWVEESDIKDLVYLQAIVKEVLRLYPPGPLLVPHENVEDCVVSGYHIPKGTRLFANVMKLQRDPKLWSNPDKFNPERFIARDIDFHGQHYEYIPFGSGRRSCPGMTYALQVEHLTMAHLIQGFNYRTPTDEPLDMKEGAGITIRKVNPVKVIITPRLAPELY.

Residues 2 to 22 (VFPVEAIVGLVTFTFLFYFLW) traverse the membrane as a helical segment. Residue K254 forms a Glycyl lysine isopeptide (Lys-Gly) (interchain with G-Cter in ubiquitin) linkage. C458 contacts heme.

It belongs to the cytochrome P450 family. CYP82E2 subfamily. Requires heme as cofactor. In terms of tissue distribution, expressed at low levels in green leaves.

The protein localises to the membrane. It functions in the pathway alkaloid biosynthesis; nicotine biosynthesis. No nicotine N-demethylase activity. This is Cytochrome P450 82E3 from Nicotiana tabacum (Common tobacco).